A 27-amino-acid polypeptide reads, in one-letter code: Trichocyst matrix protein T4-C (27 aa).

Belongs to the TMP family.

It is found in the trichocyst. In terms of biological role, structural protein that crystallize inside the trichocyst matrix. The sequence is that of Trichocyst matrix protein T4-C (T4C) from Paramecium tetraurelia.